Reading from the N-terminus, the 126-residue chain is Large ribosomal subunit protein bL17 (126 aa).

Belongs to the bacterial ribosomal protein bL17 family. As to quaternary structure, part of the 50S ribosomal subunit. Contacts protein L32.

The chain is Large ribosomal subunit protein bL17 from Coxiella burnetii (strain CbuK_Q154) (Coxiella burnetii (strain Q154)).